The sequence spans 110 residues: UPF0122 protein SAR1212 (110 aa).

This sequence belongs to the UPF0122 family.

Might take part in the signal recognition particle (SRP) pathway. This is inferred from the conservation of its genetic proximity to ftsY/ffh. May be a regulatory protein. The polypeptide is UPF0122 protein SAR1212 (Staphylococcus aureus (strain MRSA252)).